The chain runs to 261 residues: Carnitinyl-CoA dehydratase (261 aa).

Residue E111 is the Nucleophile of the active site. Residue E131 is the Proton acceptor of the active site.

The protein belongs to the enoyl-CoA hydratase/isomerase family.

It carries out the reaction (R)-carnitinyl-CoA = crotonobetainyl-CoA + H2O. It functions in the pathway amine and polyamine metabolism; carnitine metabolism. In terms of biological role, catalyzes the reversible dehydration of L-carnitinyl-CoA to crotonobetainyl-CoA. The protein is Carnitinyl-CoA dehydratase of Escherichia coli O6:K15:H31 (strain 536 / UPEC).